Reading from the N-terminus, the 507-residue chain is MCDIEEATNQLLDVNLHENQKSVQVTESDLGSESELLVTIGATVPTGFEQTAADEVREKLGSSCKISRDRGKIYFVISVESLAQVHCLRSVDNLFVVVQEFQDYQFKQTKEEVLKDFEDLAGKLPWSNPLKVWKINASFKKKKAKRKKINQNSSKEKINNGQEVKIDQRNVKKEFTSHALDSHILDYYENPAIKEDVSTLIGDDLASCKDETDESSKEETEPQVLKFRVTCNRAGEKHCFTSNEAARDFGGAVQDYFKWKADMTNFDVEVLLNIHDNEVIVGIALTEESLHRRNITHFGPTTLRSTLAYGMLRLCDPLPYDIIVDPMCGTGAIPIEGATEWSDCFHIAGDNNPLAVNRAANNIASLLTKSQIKEGKPSWGLPIDAVQWDICNLPLRTGSVDIIVTDLPFGKRMGSKKRNWNLYPACLREMSRVCTPTTGRAVLLTQDTKCFTKALSGMRHVWRKVDTVWVNVGGLRAAVYVLIRTPQAFVHPSEQDGERGTLWQCKE.

The region spanning 165–285 is the THUMP domain; it reads KIDQRNVKKE…DNEVIVGIAL (121 aa).

It belongs to the methyltransferase superfamily. Part of the heterodimeric THUMPD3-TRM112 methyltransferase complex; this complex forms an active tRNA methyltransferase, where TRMT112 acts as an activator of the catalytic subunit THUMPD3.

It is found in the cytoplasm. It carries out the reaction guanosine(6) in tRNA + S-adenosyl-L-methionine = N(2)-methylguanosine(6) in tRNA + S-adenosyl-L-homocysteine + H(+). The catalysed reaction is guanosine(7) in tRNA + S-adenosyl-L-methionine = N(2)-methylguanosine(7) in tRNA + S-adenosyl-L-homocysteine + H(+). Functionally, catalytic subunit of the THUMPD3-TRM112 methyltransferase complex, that specifically mediates the S-adenosyl-L-methionine-dependent N(2)-methylation of guanosine nucleotide at position 6 (m2G6) in tRNAs. This is one of the major tRNA (guanine-N(2))-methyltransferases. Also catalyzes the S-adenosyl-L-methionine-dependent N(2)-methylation of guanosine nucleotide at position 7 of tRNA(Trp). The chain is tRNA (guanine(6)-N(2))-methyltransferase THUMP3 from Homo sapiens (Human).